Reading from the N-terminus, the 431-residue chain is Histidine--tRNA ligase (431 aa).

This sequence belongs to the class-II aminoacyl-tRNA synthetase family. As to quaternary structure, homodimer.

The protein resides in the cytoplasm. It catalyses the reaction tRNA(His) + L-histidine + ATP = L-histidyl-tRNA(His) + AMP + diphosphate + H(+). The polypeptide is Histidine--tRNA ligase (Neisseria meningitidis serogroup C (strain 053442)).